We begin with the raw amino-acid sequence, 413 residues long: Gamma-glutamyl phosphate reductase (413 aa).

Belongs to the gamma-glutamyl phosphate reductase family.

The protein localises to the cytoplasm. The enzyme catalyses L-glutamate 5-semialdehyde + phosphate + NADP(+) = L-glutamyl 5-phosphate + NADPH + H(+). The protein operates within amino-acid biosynthesis; L-proline biosynthesis; L-glutamate 5-semialdehyde from L-glutamate: step 2/2. Its function is as follows. Catalyzes the NADPH-dependent reduction of L-glutamate 5-phosphate into L-glutamate 5-semialdehyde and phosphate. The product spontaneously undergoes cyclization to form 1-pyrroline-5-carboxylate. This chain is Gamma-glutamyl phosphate reductase, found in Lactococcus lactis subsp. cremoris (strain SK11).